The sequence spans 484 residues: Sperm motility kinase Tcr mutant form (484 aa).

In terms of domain architecture, Protein kinase spans 8–256 (YEMLETIGQG…VAEVMVHPWV (249 aa)). Residues 14–22 (IGQGGCAQV) and Lys37 contribute to the ATP site. Asp127 serves as the catalytic Proton acceptor. 2 disordered regions span residues 355–400 (EPTG…TMDQ) and 426–446 (STEG…RGWP). Polar residues predominate over residues 391 to 400 (PINTTPTMDQ).

Belongs to the protein kinase superfamily. Tyr protein kinase family. Smok subfamily. As to expression, testis-specific. Expressed in the testis from 22 days postpartum (22 dpp). Expressed late in spermiogenesis, only in Tcr-containing t-haplotypes.

The enzyme catalyses L-seryl-[protein] + ATP = O-phospho-L-seryl-[protein] + ADP + H(+). It carries out the reaction L-threonyl-[protein] + ATP = O-phospho-L-threonyl-[protein] + ADP + H(+). While the main function of Smoks is to control sperm motility, the role of Smok-Tcr, with reduced kinase activity, is to counterbalance a signaling impairment caused by the distorter/sterility loci, giving t-sperm an advantage in reaching the oocytes. Transmission ratio distortion also called segregation distortion is the name given to the phenomenon above-mentioned. Being associated with the T-complex, it allows males heterozygous for a complete t-haplotype to preferentially transmit the t-haplotype chromosome. This is Sperm motility kinase Tcr mutant form (Smoktcr) from Mus musculus (Mouse).